The sequence spans 310 residues: Protein-L-isoaspartate O-methyltransferase (310 aa).

2 disordered regions span residues methionine 1 to lysine 42 and serine 64 to valine 90. Positions glutamate 14 to alanine 32 are enriched in basic and acidic residues. A compositionally biased stretch (low complexity) spans serine 64–alanine 81. Serine 157 is an active-site residue.

It belongs to the methyltransferase superfamily. L-isoaspartyl/D-aspartyl protein methyltransferase family.

Its subcellular location is the cytoplasm. The enzyme catalyses [protein]-L-isoaspartate + S-adenosyl-L-methionine = [protein]-L-isoaspartate alpha-methyl ester + S-adenosyl-L-homocysteine. Its function is as follows. Catalyzes the methyl esterification of L-isoaspartyl residues in peptides and proteins that result from spontaneous decomposition of normal L-aspartyl and L-asparaginyl residues. It plays a role in the repair and/or degradation of damaged proteins. In Burkholderia lata (strain ATCC 17760 / DSM 23089 / LMG 22485 / NCIMB 9086 / R18194 / 383), this protein is Protein-L-isoaspartate O-methyltransferase.